A 156-amino-acid polypeptide reads, in one-letter code: Small ribosomal subunit protein bS6 (156 aa).

The segment at 95–156 is disordered; sequence AITETSPLAK…DRDEQSEDSE (62 aa). The span at 117-126 shows a compositional bias: basic and acidic residues; sequence RSGRDRDESG.

This sequence belongs to the bacterial ribosomal protein bS6 family.

In terms of biological role, binds together with bS18 to 16S ribosomal RNA. The sequence is that of Small ribosomal subunit protein bS6 from Nitrosococcus oceani (strain ATCC 19707 / BCRC 17464 / JCM 30415 / NCIMB 11848 / C-107).